We begin with the raw amino-acid sequence, 64 residues long: Small ribosomal subunit protein bS21 (64 aa).

This sequence belongs to the bacterial ribosomal protein bS21 family.

The chain is Small ribosomal subunit protein bS21 from Flavobacterium johnsoniae (strain ATCC 17061 / DSM 2064 / JCM 8514 / BCRC 14874 / CCUG 350202 / NBRC 14942 / NCIMB 11054 / UW101) (Cytophaga johnsonae).